Here is a 763-residue protein sequence, read N- to C-terminus: 5-methyltetrahydropteroyltriglutamate--homocysteine methyltransferase (763 aa).

5-methyltetrahydropteroyltri-L-glutamate contacts are provided by residues 16–19 and Lys121; that span reads RELK. Residues 440 to 442 and Glu493 each bind L-homocysteine; that span reads IGS. L-methionine-binding positions include 440-442 and Glu493; that span reads IGS. 5-methyltetrahydropteroyltri-L-glutamate-binding positions include 524-525 and Trp570; that span reads RC. Residue Asp608 coordinates L-homocysteine. Position 608 (Asp608) interacts with L-methionine. Glu614 serves as a coordination point for 5-methyltetrahydropteroyltri-L-glutamate. The Zn(2+) site is built by His650, Cys652, and Glu674. The active-site Proton donor is the His703. Zn(2+) is bound at residue Cys735.

Belongs to the vitamin-B12 independent methionine synthase family. Requires Zn(2+) as cofactor.

It carries out the reaction 5-methyltetrahydropteroyltri-L-glutamate + L-homocysteine = tetrahydropteroyltri-L-glutamate + L-methionine. The protein operates within amino-acid biosynthesis; L-methionine biosynthesis via de novo pathway; L-methionine from L-homocysteine (MetE route): step 1/1. Its function is as follows. Catalyzes the transfer of a methyl group from 5-methyltetrahydrofolate to homocysteine resulting in methionine formation. The sequence is that of 5-methyltetrahydropteroyltriglutamate--homocysteine methyltransferase from Paraburkholderia phymatum (strain DSM 17167 / CIP 108236 / LMG 21445 / STM815) (Burkholderia phymatum).